The sequence spans 582 residues: Protein bps2 (582 aa).

28 to 35 provides a ligand contact to ATP; that stretch reads APNAYGKT. Positions 243–281 form a coiled coil; the sequence is RQSYERQLQEINAQLQKITAQRNEAEIEIRLLEKVLDQI. In terms of domain architecture, Zinc-hook spans 243 to 351; sequence RQSYERQLQE…KLKELDQISS (109 aa). Zn(2+)-binding residues include Cys292 and Cys295. A coiled-coil region spans residues 320–351; sequence SLYAGIKKEADELLSKKSEIEKKLKELDQISS.

In Acidianus ambivalens (Desulfurolobus ambivalens), this protein is Protein bps2 (bps2).